Consider the following 294-residue polypeptide: Acetylglutamate kinase (294 aa).

Residues 63–64 (GG), Arg-85, and Asn-188 contribute to the substrate site.

Belongs to the acetylglutamate kinase family. ArgB subfamily.

It is found in the cytoplasm. The catalysed reaction is N-acetyl-L-glutamate + ATP = N-acetyl-L-glutamyl 5-phosphate + ADP. The protein operates within amino-acid biosynthesis; L-arginine biosynthesis; N(2)-acetyl-L-ornithine from L-glutamate: step 2/4. Its function is as follows. Catalyzes the ATP-dependent phosphorylation of N-acetyl-L-glutamate. The sequence is that of Acetylglutamate kinase from Methanococcus maripaludis (strain DSM 14266 / JCM 13030 / NBRC 101832 / S2 / LL).